The sequence spans 57 residues: Large ribosomal subunit protein eL20 (57 aa).

Residues 1–10 are compositionally biased toward polar residues; that stretch reads MSEFTVTGTF. The disordered stretch occupies residues 1–21; that stretch reads MSEFTVTGTFESRDGNQPFEK.

It belongs to the eukaryotic ribosomal protein eL20 family. Part of the 50S ribosomal subunit. Binds 23S rRNA.

The chain is Large ribosomal subunit protein eL20 from Halomicrobium mukohataei (strain ATCC 700874 / DSM 12286 / JCM 9738 / NCIMB 13541) (Haloarcula mukohataei).